A 303-amino-acid chain; its full sequence is Elongation factor Ts (303 aa).

The involved in Mg(2+) ion dislocation from EF-Tu stretch occupies residues 80–83 (TDFV).

Belongs to the EF-Ts family.

Its subcellular location is the cytoplasm. Associates with the EF-Tu.GDP complex and induces the exchange of GDP to GTP. It remains bound to the aminoacyl-tRNA.EF-Tu.GTP complex up to the GTP hydrolysis stage on the ribosome. The polypeptide is Elongation factor Ts (Clostridium perfringens (strain SM101 / Type A)).